The chain runs to 180 residues: Interleukin-17B (180 aa).

The signal sequence occupies residues Met1–Pro22. Positions Pro22–Gln44 are disordered. Residues Arg23 to Gln32 show a composition bias toward basic residues. Residue Asn75 is glycosylated (N-linked (GlcNAc...) asparagine). 2 disulfides stabilise this stretch: Cys121/Cys176 and Cys126/Cys178.

The protein belongs to the IL-17 family.

Its subcellular location is the secreted. Functionally, stimulates the release of tumor necrosis factor alpha and IL-1-beta from the monocytic cell line THP-1. The sequence is that of Interleukin-17B (Il17b) from Mus musculus (Mouse).